The primary structure comprises 367 residues: Heparan sulfate glucosamine 3-O-sulfotransferase 2 (367 aa).

Topologically, residues 1–19 are cytoplasmic; it reads MAYRVLGRAGPPQPRRARR. The chain crosses the membrane as a helical; Signal-anchor for type II membrane protein span at residues 20–39; it reads LLFAFTLSLSCTYLCYSFLC. Over 40-367 the chain is Lumenal; it reads CCDGLGQSRL…ETVGQDFRWE (328 aa). Residues 66–115 form a disordered region; the sequence is LLAKSRPCDPPGPTPSEPSAPSAPAAAAPAPRLSGSNHSGSPKPGTKRLP. Pro residues predominate over residues 73–83; sequence CDPPGPTPSEP. Low complexity predominate over residues 84-96; the sequence is SAPSAPAAAAPAP. A glycan (N-linked (GlcNAc...) asparagine) is linked at Asn102. Residue 124 to 128 coordinates 3'-phosphoadenylyl sulfate; sequence KGGTR. Residues 146–152 and 177–180 each bind substrate; these read EPHFFDR and KTPS. N-linked (GlcNAc...) asparagine glycosylation is present at Asn193. Arg205 and Ser213 together coordinate 3'-phosphoadenylyl sulfate. A glycan (N-linked (GlcNAc...) asparagine) is linked at Asn235. Substrate is bound at residue 245–246; sequence WN. Asn306 carries N-linked (GlcNAc...) asparagine glycosylation. A disulfide bridge links Cys313 with Cys325. 330–334 provides a ligand contact to 3'-phosphoadenylyl sulfate; it reads KGRTH.

It belongs to the sulfotransferase 1 family.

It is found in the golgi apparatus membrane. The enzyme catalyses alpha-D-glucosaminyl-[heparan sulfate](n) + 3'-phosphoadenylyl sulfate = 3-sulfo-alpha-D-glucosaminyl-[heparan sulfate](n) + adenosine 3',5'-bisphosphate + H(+). In terms of biological role, sulfotransferase that utilizes 3'-phospho-5'-adenylyl sulfate (PAPS) to catalyze the transfer of a sulfo group to an N-unsubstituted glucosamine linked to a 2-O-sulfo iduronic acid unit on heparan sulfate. Catalyzes the O-sulfation of glucosamine in GlcA2S-GlcNS. Unlike HS3ST1/3-OST-1, does not convert non-anticoagulant heparan sulfate to anticoagulant heparan sulfate. This chain is Heparan sulfate glucosamine 3-O-sulfotransferase 2 (Hs3st2), found in Mus musculus (Mouse).